We begin with the raw amino-acid sequence, 270 residues long: DNA packaging protein OPG160 (270 aa).

25 to 32 (GGSGSGKT) serves as a coordination point for ATP.

This sequence belongs to the orthopoxvirus OPG160 protein family. Interacts with protein OPG137.

Functionally, participates in viral DNA packaging and virion morphogenesis. The polypeptide is DNA packaging protein OPG160 (OPG160) (Variola virus (isolate Human/India/Ind3/1967) (VARV)).